The chain runs to 205 residues: Large ribosomal subunit protein uL13 (205 aa).

This sequence belongs to the universal ribosomal protein uL13 family.

The chain is Large ribosomal subunit protein uL13 (RPL13A) from Lupinus luteus (European yellow lupine).